Consider the following 229-residue polypeptide: MAKKSKQMRAALEKVDSTKAYSVEEAVALVKETNFAKFDASVEVAYNLNIDVRKADQQIRGAMVLPNGTGKTQRVLVFARGAKAEEAKAAGADFVGEDDLVAKINGGWLDFDVVIATPDMMAIVGRLGRVLGPRNLMPNPKTGTVTMDVAKAVEESKGGKITYRADKAGNVQALIGKVSFDADKLVENFKAFHDVMAKAKPATAKGTYMANVSITSTQGVGIKVDPNSL.

It belongs to the universal ribosomal protein uL1 family. Part of the 50S ribosomal subunit.

Its function is as follows. Binds directly to 23S rRNA. The L1 stalk is quite mobile in the ribosome, and is involved in E site tRNA release. In terms of biological role, protein L1 is also a translational repressor protein, it controls the translation of the L11 operon by binding to its mRNA. This is Large ribosomal subunit protein uL1 from Streptococcus pyogenes serotype M1.